Reading from the N-terminus, the 1006-residue chain is Kinesin-like protein KIN-5C (1006 aa).

One can recognise a Kinesin motor domain in the interval 9–355 (NVQVLLRCRP…LDYAHRAKNI (347 aa)). 95 to 102 (GQTGTGKT) provides a ligand contact to ATP. A coiled-coil region spans residues 371–522 (IKDLYGEIER…NASLFQKIAR (152 aa)).

It belongs to the TRAFAC class myosin-kinesin ATPase superfamily. Kinesin family. KIN-5/BimC subfamily.

The protein localises to the cytoplasm. It is found in the cytoskeleton. Its subcellular location is the spindle. Responsible for microtubule translocation. May be important for the organization of phragmoplast-specific arrays of microtubules. Plays an essential role in stabilizing the mitotic spindle. Required during mitotic cytokinesis. In Nicotiana tabacum (Common tobacco), this protein is Kinesin-like protein KIN-5C.